Here is a 305-residue protein sequence, read N- to C-terminus: Acetaldehyde dehydrogenase (305 aa).

Residue Ser-12–Ile-15 coordinates NAD(+). Cys-127 serves as the catalytic Acyl-thioester intermediate. Residues Ser-158–Asn-166 and Asn-277 contribute to the NAD(+) site.

It belongs to the acetaldehyde dehydrogenase family.

The enzyme catalyses acetaldehyde + NAD(+) + CoA = acetyl-CoA + NADH + H(+). This is Acetaldehyde dehydrogenase from Mycolicibacterium paratuberculosis (strain ATCC BAA-968 / K-10) (Mycobacterium paratuberculosis).